The primary structure comprises 337 residues: tRNA N6-adenosine threonylcarbamoyltransferase (337 aa).

H111 and H115 together coordinate Fe cation. Substrate-binding positions include 134–138, D167, G180, and N272; that span reads LVSGG. Residue D300 coordinates Fe cation.

This sequence belongs to the KAE1 / TsaD family. Fe(2+) serves as cofactor.

It localises to the cytoplasm. It carries out the reaction L-threonylcarbamoyladenylate + adenosine(37) in tRNA = N(6)-L-threonylcarbamoyladenosine(37) in tRNA + AMP + H(+). Its function is as follows. Required for the formation of a threonylcarbamoyl group on adenosine at position 37 (t(6)A37) in tRNAs that read codons beginning with adenine. Is involved in the transfer of the threonylcarbamoyl moiety of threonylcarbamoyl-AMP (TC-AMP) to the N6 group of A37, together with TsaE and TsaB. TsaD likely plays a direct catalytic role in this reaction. This Yersinia pseudotuberculosis serotype I (strain IP32953) protein is tRNA N6-adenosine threonylcarbamoyltransferase.